Reading from the N-terminus, the 415-residue chain is Serine hydroxymethyltransferase (415 aa).

(6S)-5,6,7,8-tetrahydrofolate-binding positions include Leu117 and 121–123 (GHL). The residue at position 226 (Lys226) is an N6-(pyridoxal phosphate)lysine.

It belongs to the SHMT family. In terms of assembly, homodimer. Pyridoxal 5'-phosphate is required as a cofactor.

It localises to the cytoplasm. The enzyme catalyses (6R)-5,10-methylene-5,6,7,8-tetrahydrofolate + glycine + H2O = (6S)-5,6,7,8-tetrahydrofolate + L-serine. It participates in one-carbon metabolism; tetrahydrofolate interconversion. The protein operates within amino-acid biosynthesis; glycine biosynthesis; glycine from L-serine: step 1/1. In terms of biological role, catalyzes the reversible interconversion of serine and glycine with tetrahydrofolate (THF) serving as the one-carbon carrier. This reaction serves as the major source of one-carbon groups required for the biosynthesis of purines, thymidylate, methionine, and other important biomolecules. Also exhibits THF-independent aldolase activity toward beta-hydroxyamino acids, producing glycine and aldehydes, via a retro-aldol mechanism. The protein is Serine hydroxymethyltransferase of Leptospira interrogans serogroup Icterohaemorrhagiae serovar copenhageni (strain Fiocruz L1-130).